We begin with the raw amino-acid sequence, 541 residues long: Putative transferase YhbX (541 aa).

Residues 1-60 (MTVFNKFARSFKSHWLLYLSVIVFGITNLVASSGAHMVQRLLFFVLTILVVKRISSLPLR) lie on the Periplasmic side of the membrane. A helical membrane pass occupies residues 61–81 (LLVAAPFVLLTAADMSISLYS). Over 82-110 (WCTFGTTFNDGFAISVLQSDPDEVAKMLG) the chain is Cytoplasmic. The helical transmembrane segment at 111–131 (MYSPYLCAFAFLSLLFLAVII) threads the bilayer. Topologically, residues 132 to 141 (KYDVSLPTKK) are periplasmic. Residues 142-162 (VTGILLLIVISGSLFSACQFA) traverse the membrane as a helical segment. Topologically, residues 163–264 (YKDAKNKNAF…RKQIKLFNQA (102 aa)) are cytoplasmic. A helical transmembrane segment spans residues 265–285 (ISGAPYTALSVPLSLTADSVL). Residues 286-541 (SHDIHNYPDN…QGNPTPEGQG (256 aa)) lie on the Periplasmic side of the membrane.

It belongs to the phosphoethanolamine transferase family.

It localises to the cell inner membrane. There are several lipid A forms in this strain, including a phosphoethanolamine (1-O-P-pEtN) form; overexpression of this gene does not lead to higher levels of the 1-O-P-pEtN form of lipid A. In Escherichia coli O157:H7, this protein is Putative transferase YhbX (yhbX).